The following is a 23-amino-acid chain: Nephrotoxin PsTX-115 (23 aa).

The protein localises to the secreted. It localises to the nematocyst. Its function is as follows. Nephrotoxin. When injected intravenously in rats, causes severe destructive glomerular changes. At 24 hours post-injection partial disruption of the glomerular basement membrane, massive thrombus formation in glomerular capillaries, severe mesangiolysis and infiltrating cells were observed in the majority of glomeruli. In Phyllodiscus semoni (Night anemone), this protein is Nephrotoxin PsTX-115.